Reading from the N-terminus, the 424-residue chain is Tyrosine--tRNA ligase (424 aa).

Tyr37 lines the L-tyrosine pocket. A 'HIGH' region motif is present at residues 42–51 (PTADSLHLGH). Positions 175 and 179 each coordinate L-tyrosine. Residues 235–239 (KFGKT) carry the 'KMSKS' region motif. Lys238 serves as a coordination point for ATP. The 58-residue stretch at 357-414 (AELQKALVSAQLAPSRSQARTLIQSSSISVNGKKQLKPEYIFTSEDRLLDRYTLLRRG) folds into the S4 RNA-binding domain.

Belongs to the class-I aminoacyl-tRNA synthetase family. TyrS type 1 subfamily. As to quaternary structure, homodimer.

Its subcellular location is the cytoplasm. The enzyme catalyses tRNA(Tyr) + L-tyrosine + ATP = L-tyrosyl-tRNA(Tyr) + AMP + diphosphate + H(+). In terms of biological role, catalyzes the attachment of tyrosine to tRNA(Tyr) in a two-step reaction: tyrosine is first activated by ATP to form Tyr-AMP and then transferred to the acceptor end of tRNA(Tyr). The polypeptide is Tyrosine--tRNA ligase (Hamiltonella defensa subsp. Acyrthosiphon pisum (strain 5AT)).